A 162-amino-acid chain; its full sequence is Endoribonuclease YbeY (162 aa).

3 residues coordinate Zn(2+): histidine 128, histidine 132, and histidine 138.

This sequence belongs to the endoribonuclease YbeY family. Zn(2+) serves as cofactor.

Its subcellular location is the cytoplasm. Functionally, single strand-specific metallo-endoribonuclease involved in late-stage 70S ribosome quality control and in maturation of the 3' terminus of the 16S rRNA. The sequence is that of Endoribonuclease YbeY from Lactococcus lactis subsp. cremoris (strain SK11).